Reading from the N-terminus, the 604-residue chain is Protein glass (604 aa).

4 disordered regions span residues 111 to 139 (ISTT…HGYW), 199 to 237 (NSHN…GGNN), 359 to 400 (LPPL…SPTS), and 414 to 434 (EDEE…GGEM). Low complexity-rich tracts occupy residues 117–126 (ASSGNGSSNN) and 200–237 (SHNH…GGNN). A compositionally biased stretch (acidic residues) spans 414–427 (EDEEDSNEDLDGDE). 5 consecutive C2H2-type zinc fingers follow at residues 437–459 (NLCR…LRTH), 465–487 (YRCP…VRTH), 493–515 (FRCP…MRTH), 521–543 (YRCS…LRIH), and 549–571 (YQCK…MRVH). The tract at residues 566–604 (RHMRVHGNNNSSNGSNGATGVGGESSTGSGVGGGNSLLT) is disordered. Positions 572–581 (GNNNSSNGSN) are enriched in low complexity. Residues 582-604 (GATGVGGESSTGSGVGGGNSLLT) show a composition bias toward gly residues.

Its subcellular location is the nucleus. In terms of biological role, transcription factor required for gene expression specific to photoreceptor cells. In Drosophila melanogaster (Fruit fly), this protein is Protein glass (gl).